Reading from the N-terminus, the 154-residue chain is Myoglobin (154 aa).

Residues glycine 2–lysine 148 form the Globin domain. Serine 4 carries the phosphoserine modification. Histidine 65 is a nitrite binding site. Residue histidine 65 participates in O2 binding. Threonine 68 bears the Phosphothreonine mark. Histidine 94 contacts heme b.

The protein belongs to the globin family. As to quaternary structure, monomeric.

The protein localises to the cytoplasm. The protein resides in the sarcoplasm. It catalyses the reaction Fe(III)-heme b-[protein] + nitric oxide + H2O = Fe(II)-heme b-[protein] + nitrite + 2 H(+). The enzyme catalyses H2O2 + AH2 = A + 2 H2O. In terms of biological role, monomeric heme protein which primary function is to store oxygen and facilitate its diffusion within muscle tissues. Reversibly binds oxygen through a pentacoordinated heme iron and enables its timely and efficient release as needed during periods of heightened demand. Depending on the oxidative conditions of tissues and cells, and in addition to its ability to bind oxygen, it also has a nitrite reductase activity whereby it regulates the production of bioactive nitric oxide. Under stress conditions, like hypoxia and anoxia, it also protects cells against reactive oxygen species thanks to its pseudoperoxidase activity. The chain is Myoglobin (MB) from Nycticebus coucang (Slow loris).